An 855-amino-acid polypeptide reads, in one-letter code: Pentatricopeptide repeat-containing protein At1g74750 (855 aa).

The segment at 21-40 (GSRPSAADGNSCTCAEDESG) is disordered. PPR repeat units lie at residues 358–392 (DGHT…GCKP), 393–427 (NTVT…GCEP), 428–462 (DRVT…GLSP), 463–497 (DTFT…GCTP), 498–532 (NLVT…GFQP), 533–567 (DKVT…NWVP), 568–602 (DEPV…GLRP), and 603–637 (NVPT…GLHP). One can recognise a Smr domain in the interval 755-838 (INLHVMSEGT…NSGCFVGSGE (84 aa)).

Belongs to the PPR family. P subfamily.

The chain is Pentatricopeptide repeat-containing protein At1g74750 from Arabidopsis thaliana (Mouse-ear cress).